The chain runs to 237 residues: Peptidase E (237 aa).

Active-site charge relay system residues include S122, D137, and H159.

This sequence belongs to the peptidase S51 family.

It is found in the cytoplasm. The catalysed reaction is Dipeptidase E catalyzes the hydrolysis of dipeptides Asp-|-Xaa. It does not act on peptides with N-terminal Glu, Asn or Gln, nor does it cleave isoaspartyl peptides.. Hydrolyzes dipeptides containing N-terminal aspartate residues. May play a role in allowing the cell to use peptide aspartate to spare carbon otherwise required for the synthesis of the aspartate family of amino acids. The polypeptide is Peptidase E (Shewanella baltica (strain OS185)).